Consider the following 481-residue polypeptide: Long chain base biosynthesis protein 1b (481 aa).

A helical membrane pass occupies residues 32–52 (FGIHIDGHLVVEGLLIAAILF).

This sequence belongs to the class-II pyridoxal-phosphate-dependent aminotransferase family. In terms of assembly, heterodimer with LCB2. Component of the serine palmitoyltransferase (SPT) complex, composed of LCB1 and LCB2. Requires pyridoxal 5'-phosphate as cofactor.

Its subcellular location is the endoplasmic reticulum membrane. The enzyme catalyses L-serine + hexadecanoyl-CoA + H(+) = 3-oxosphinganine + CO2 + CoA. It participates in lipid metabolism; sphingolipid metabolism. Functionally, serine palmitoyltransferase (SPT). The heterodimer formed with LCB2 constitutes the catalytic core. In Oryza sativa subsp. japonica (Rice), this protein is Long chain base biosynthesis protein 1b.